The following is a 160-amino-acid chain: Cytochrome c-type biogenesis protein CcmE (160 aa).

The Cytoplasmic segment spans residues 1–8; it reads MNPRRKKR. A helical; Signal-anchor for type II membrane protein transmembrane segment spans residues 9–29; that stretch reads LGVVLAILFGLSATIGLIIYA. The Periplasmic portion of the chain corresponds to 30 to 160; sequence LNQNMDLFYT…SQEQKQGSDQ (131 aa). Heme contacts are provided by His-128 and Tyr-132.

This sequence belongs to the CcmE/CycJ family.

The protein localises to the cell inner membrane. Heme chaperone required for the biogenesis of c-type cytochromes. Transiently binds heme delivered by CcmC and transfers the heme to apo-cytochromes in a process facilitated by CcmF and CcmH. The polypeptide is Cytochrome c-type biogenesis protein CcmE (Vibrio cholerae serotype O1 (strain ATCC 39541 / Classical Ogawa 395 / O395)).